The sequence spans 490 residues: Lipoprotein lipase (490 aa).

Residues 1–25 form the signal peptide; sequence MERGRGMGKTALLAVLCLCLRGAAG. The interaction with GPIHBP1 stretch occupies residues 32–53; the sequence is MNFEGIESKFSLRTPAEPDEDV. The cysteines at positions 54 and 67 are disulfide-linked. Residue N70 is glycosylated (N-linked (GlcNAc...) (complex) asparagine). The residue at position 121 (Y121) is a 3'-nitrotyrosine. Catalysis depends on S159, which acts as the Nucleophile. The active-site Charge relay system is D183. At Y191 the chain carries 3'-nitrotyrosine. The Ca(2+) site is built by A194, R197, S199, and D202. C243 and C266 form a disulfide bridge. The essential for determining substrate specificity stretch occupies residues 243 to 266; that stretch reads CNLGEALRLIAEKGFSDVDQLVKC. H268 acts as the Charge relay system in catalysis. Cystine bridges form between C291–C310 and C302–C305. The region spanning 341–464 is the PLAT domain; the sequence is FHYQVKIHFF…KGEEAAIFVK (124 aa). A 3'-nitrotyrosine modification is found at Y343. N354 and N386 each carry an N-linked (GlcNAc...) asparagine glycan. Residues 417-421 are important for interaction with lipoprotein particles; the sequence is WSDWW. The interval 430 to 434 is important for heparin binding; that stretch reads RVRVK. Heparin is bound at residue 430–441; the sequence is RVRVKSGETQKK. The interaction with GPIHBP1 stretch occupies residues 443–467; that stretch reads VFCSRDGSSRLGKGEEAAIFVKCLE. The cysteines at positions 445 and 465 are disulfide-linked. The tract at residues 471–490 is disordered; the sequence is SRKRGGAKKASKENSAHESA. Positions 480–490 are enriched in basic and acidic residues; sequence ASKENSAHESA.

It belongs to the AB hydrolase superfamily. Lipase family. Homodimer. Interacts with GPIHBP1 with 1:1 stoichiometry. Interacts with APOC2; the interaction activates LPL activity in the presence of lipids. Interaction with heparan sulfate proteoglycans is required to protect LPL against loss of activity. Associates with lipoprotein particles in blood plasma. Interacts with LMF1 and SEL1L; interaction with SEL1L is required to prevent aggregation of newly synthesized LPL in the endoplasmic reticulum (ER), and for normal export of LPL from the ER to the extracellular space. Post-translationally, N-glycan at Asn-70 is a triantennary complex oligosaccharide containing sialic acid, galactose, mannose, and N-acetylglucosamine, the reducing GlcNAc being sulfated at C6. Tyrosine nitration after lipopolysaccharide (LPS) challenge down-regulates the lipase activity.

It is found in the cell membrane. The protein resides in the secreted. Its subcellular location is the extracellular space. The protein localises to the extracellular matrix. The enzyme catalyses a triacylglycerol + H2O = a diacylglycerol + a fatty acid + H(+). It catalyses the reaction a 1,2-diacyl-sn-glycero-3-phosphocholine + H2O = a 2-acyl-sn-glycero-3-phosphocholine + a fatty acid + H(+). It carries out the reaction 1,2,3-tri-(9Z-octadecenoyl)-glycerol + H2O = di-(9Z)-octadecenoylglycerol + (9Z)-octadecenoate + H(+). The catalysed reaction is 1,2-di-(9Z-octadecenoyl)-sn-glycero-3-phosphocholine + H2O = (9Z-octadecenoyl)-sn-glycero-3-phosphocholine + (9Z)-octadecenoate + H(+). The enzyme catalyses 1,2,3-tributanoylglycerol + H2O = dibutanoylglycerol + butanoate + H(+). It catalyses the reaction 1,2-dihexadecanoyl-sn-glycero-3-phosphocholine + H2O = hexadecanoyl-sn-glycero-3-phosphocholine + hexadecanoate + H(+). Its activity is regulated as follows. Ca(2+) binding promotes protein stability and formation of the active homodimer. Key enzyme in triglyceride metabolism. Catalyzes the hydrolysis of triglycerides from circulating chylomicrons and very low density lipoproteins (VLDL), and thereby plays an important role in lipid clearance from the blood stream, lipid utilization and storage. Although it has both phospholipase and triglyceride lipase activities it is primarily a triglyceride lipase with low but detectable phospholipase activity. Mediates margination of triglyceride-rich lipoprotein particles in capillaries. Recruited to its site of action on the luminal surface of vascular endothelium by binding to GPIHBP1 and cell surface heparan sulfate proteoglycans. The protein is Lipoprotein lipase (LPL) of Gallus gallus (Chicken).